We begin with the raw amino-acid sequence, 511 residues long: Prolyl 3-hydroxylase OGFOD1 (511 aa).

The disordered stretch occupies residues 1–20 (MTGKRGTAAGTDGSGNKKGK). The region spanning 138–240 (KTVDISCAQY…RLSVSGWFHG (103 aa)) is the Fe2OG dioxygenase domain. 2 residues coordinate Fe cation: H156 and D158. Y170 lines the 2-oxoglutarate pocket. Position 219 (H219) interacts with Fe cation. R231 provides a ligand contact to 2-oxoglutarate. Residues 372–403 (NEESDEGEGPSEPNTVSQQGASSEDDKVPSCS) form a disordered region.

This sequence belongs to the TPA1 family. In terms of assembly, monomer. The cofactor is Fe(2+). L-ascorbate is required as a cofactor.

It localises to the cytoplasm. It is found in the nucleus. It carries out the reaction [ribosomal protein uS12]-L-proline + 2-oxoglutarate + O2 = [ribosomal protein uS12]-(3S)-3-hydroxy-L-proline + succinate + CO2. Functionally, prolyl 3-hydroxylase that catalyzes 3-hydroxylation of 'Pro-62' of small ribosomal subunit uS12 (rps23), thereby regulating protein translation termination efficiency. Involved in stress granule formation. This chain is Prolyl 3-hydroxylase OGFOD1 (ogfod1), found in Xenopus laevis (African clawed frog).